Here is a 306-residue protein sequence, read N- to C-terminus: MKNEFLNFEQIDRATWQQLHRKTTIPLSQSELNSIKSFNDRIQLHEVSDIYLPLVNLIHIYRKARKDLNFTKSLFLQKTIKPQPFIIGVSGSVAVGKSTTSRLLQILIARTFKYAKVELVTTDGFLQPNAVLEERQLLNKKGFPESYDMEKLIDFLDKIKNGYDCQIPVYSHEIYDIIPNKTQEIKSPDFLIVEGINVFQNPQNQRLYVSDYFDLSIYVDADVEHIETWYLERFQKLLTLAKNDPNNYYHRFTQMTYPEILSIAQNTWKNINLANLEKFIEPTRNRADIILHKAENHEIDKIYLKK.

91–98 (GSVAVGKS) serves as a coordination point for ATP.

Belongs to the prokaryotic pantothenate kinase family.

Its subcellular location is the cytoplasm. The enzyme catalyses (R)-pantothenate + ATP = (R)-4'-phosphopantothenate + ADP + H(+). The protein operates within cofactor biosynthesis; coenzyme A biosynthesis; CoA from (R)-pantothenate: step 1/5. The protein is Pantothenate kinase of Streptococcus suis (strain 05ZYH33).